Consider the following 610-residue polypeptide: Zinc metalloproteinase-disintegrin-like bothropasin (610 aa).

A signal peptide spans methionine 1–serine 20. Residues isoleucine 21–glutamine 191 constitute a propeptide that is removed on maturation. Glutamine 192 is modified (pyrrolidone carboxylic acid). One can recognise a Peptidase M12B domain in the interval arginine 198–proline 394. Ca(2+)-binding residues include glutamate 201 and aspartate 285. 3 cysteine pairs are disulfide-bonded: cysteine 309–cysteine 389, cysteine 349–cysteine 373, and cysteine 351–cysteine 356. Residue histidine 334 coordinates Zn(2+). Residue glutamate 335 is part of the active site. Residues histidine 338 and histidine 344 each contribute to the Zn(2+) site. Asparagine 372 carries an N-linked (GlcNAc...) asparagine glycan. The Ca(2+) site is built by cysteine 389, asparagine 392, valine 404, asparagine 407, leucine 409, glutamate 411, glutamate 414, and aspartate 417. The region spanning proline 402 to asparagine 488 is the Disintegrin domain. Cystine bridges form between cysteine 405–cysteine 424, cysteine 405–cysteine 434, cysteine 416–cysteine 429, cysteine 416–cysteine 434, cysteine 418–cysteine 424, cysteine 428–cysteine 451, cysteine 442–cysteine 448, cysteine 447–cysteine 473, cysteine 460–cysteine 480, cysteine 467–cysteine 492, cysteine 467–cysteine 499, cysteine 492–cysteine 504, cysteine 499–cysteine 504, cysteine 511–cysteine 526, cysteine 511–cysteine 561, cysteine 526–cysteine 572, cysteine 539–cysteine 549, cysteine 549–cysteine 556, cysteine 556–cysteine 598, cysteine 561–cysteine 572, cysteine 592–cysteine 603, and cysteine 598–cysteine 603. Residues glutamate 466 to aspartate 468 carry the D/ECD-tripeptide motif. Residues aspartate 468, proline 469, glutamate 471, aspartate 483, and valine 484 each coordinate Ca(2+).

This sequence belongs to the venom metalloproteinase (M12B) family. P-III subfamily. P-IIIb sub-subfamily. Monomer. Zn(2+) serves as cofactor. Expressed by the venom gland.

The protein localises to the secreted. The enzyme catalyses Cleavage of 5-His-|-Leu-6, 10-His-|-Leu-11, 14-Ala-|-Leu-15, 16-Tyr-|-Leu-17 and 24-Phe-|-Phe-25 in insulin B chain.. Its activity is regulated as follows. Inhibited by EDTA and EGTA. Has caseinolytic activity. Causes hemorrhage on rabbit skin and causes myonecrosis in mouse tibialis anterior muscle. Its function is as follows. Inhibits platelet aggregation. The protein is Zinc metalloproteinase-disintegrin-like bothropasin of Bothrops jararaca (Jararaca).